Consider the following 579-residue polypeptide: Cytochrome P450 monooxygenase ORF6 (579 aa).

Asn-2 is a glycosylation site (N-linked (GlcNAc...) asparagine). A helical membrane pass occupies residues 7 to 29; sequence PLGSFVGTTLLLFILYKLVKLAY. N-linked (GlcNAc...) asparagine glycans are attached at residues Asn-194 and Asn-390. Cys-512 provides a ligand contact to heme.

This sequence belongs to the cytochrome P450 family. Heme serves as cofactor.

The protein localises to the membrane. It participates in sesquiterpene biosynthesis. Functionally, cytochrome P450 monooxygenase; part of the gene cluster that mediates the biosynthesis of PR-toxin, a bicyclic sesquiterpene belonging to the eremophilane class and acting as a mycotoxin. The first step of the pathway is catalyzed by the aristolochene synthase which performs the cyclization of trans,trans-farnesyl diphosphate (FPP) to the bicyclic sesquiterpene aristolochene. Following the formation of aristolochene, the non-oxygenated aristolochene is converted to the trioxygenated intermediate eremofortin B, via 7-epi-neopetasone. This conversion appears to involve three enzymes, a hydroxysterol oxidase-like enzyme, the quinone-oxidase prx3 that forms the quinone-type-structure in the bicyclic nucleus of aristolochene with the C8-oxo group and the C-3 hydroxyl group, and the P450 monooxygenase ORF6 that introduces the epoxide at the double bond between carbons 1 and 2. No monoxy or dioxy-intermediates have been reported to be released to the broth, so these three early oxidative reactions may be coupled together. Eremofortin B is further oxidized by another P450 monooxygenase, that introduces a second epoxide between carbons 7 and 11 prior to acetylation to eremofortin A by the acetyltransferase ORF8. The second epoxidation may be performed by a second P450 monooxygenase. After the acetylation step, eremofortin A is converted to eremofortin C and then to PR-toxin. First the conversion of eremofortin A to eremofortin C proceeds by oxidation of the side chain of the molecule at C-12 and is catalyzed by the short-chain oxidoreductase prx1. The cytochrome P450 monooxygenase ORF6 is probably also involved in this step. The primary alcohol formed at C-12 is finally oxidized by the short-chain alcohol dehydrogenase prx4 that forms PR-toxin. The protein is Cytochrome P450 monooxygenase ORF6 of Penicillium roqueforti (strain FM164).